The sequence spans 273 residues: Ribonuclease Z (273 aa).

5 residues coordinate Zn(2+): histidine 61, histidine 63, histidine 146, aspartate 169, and histidine 233.

This sequence belongs to the RNase Z family. In terms of assembly, homodimer. Zn(2+) serves as cofactor.

The enzyme catalyses Endonucleolytic cleavage of RNA, removing extra 3' nucleotides from tRNA precursor, generating 3' termini of tRNAs. A 3'-hydroxy group is left at the tRNA terminus and a 5'-phosphoryl group is left at the trailer molecule.. Zinc phosphodiesterase, which displays some tRNA 3'-processing endonuclease activity. Probably involved in tRNA maturation, by removing a 3'-trailer from precursor tRNA. This Mycobacterium tuberculosis (strain ATCC 25177 / H37Ra) protein is Ribonuclease Z.